The primary structure comprises 427 residues: Probable G-protein coupled receptor 150 (427 aa).

Over 1–3 (MED) the chain is Extracellular. Residues 4–24 (PFSLAILNPASNLSVPTQPSW) traverse the membrane as a helical segment. The Cytoplasmic portion of the chain corresponds to 25-50 (SLNLTSEQGASVPGPHSPPRGPPSHR). The helical transmembrane segment at 51 to 71 (IHLVFLGIILVAAVAGNTTVL) threads the bilayer. The Extracellular portion of the chain corresponds to 72-89 (CRLCGGSSGPWPGPKRRK). Residues 90 to 110 (MDFLLVQLAAADLYASGGTAL) form a helical membrane-spanning segment. At 111–170 (SQLAWELLGDPRPALGDLACRLSHLLQASGRGASAHLVALIALERQLAVRIPQGPQLPAR) the chain is on the cytoplasmic side. The chain crosses the membrane as a helical span at residues 171-191 (ALAALSWLLALLLALPPTFVV). Residues 192 to 230 (RWDAPPSSTANAWPGKHCCRGIFAPLPRWHLQVYALYEA) are Extracellular-facing. The chain crosses the membrane as a helical span at residues 231 to 251 (IVGFAAPVALLGFSCGHLLCV). Residues 252–286 (WWQRGSQAPVARMPWSPSMARASLPSALPQAKVQS) are Cytoplasmic-facing. The chain crosses the membrane as a helical span at residues 287-307 (LKMSLALALLFVGCDLPYFAA). Topologically, residues 308–327 (RLAAAWSSKPAGDWERESLV) are extracellular. Residues 328 to 348 (AAMRVLEVANSAINPLIYLFF) traverse the membrane as a helical segment. Over 349-427 (QAGDCRLWRR…PPPCSCESAF (79 aa)) the chain is Cytoplasmic. A disordered region spans residues 402–427 (EERNQGCLRPPPPRPRPPPCSCESAF). The span at 410 to 421 (RPPPPRPRPPPC) shows a compositional bias: pro residues.

This sequence belongs to the G-protein coupled receptor 1 family.

It is found in the cell membrane. In terms of biological role, orphan receptor. The polypeptide is Probable G-protein coupled receptor 150 (Gpr150) (Mus musculus (Mouse)).